Here is a 94-residue protein sequence, read N- to C-terminus: Small ribosomal subunit protein uS19 (94 aa).

It belongs to the universal ribosomal protein uS19 family.

In terms of biological role, protein S19 forms a complex with S13 that binds strongly to the 16S ribosomal RNA. The polypeptide is Small ribosomal subunit protein uS19 (Endomicrobium trichonymphae).